The primary structure comprises 495 residues: Glucokinase (495 aa).

One can recognise a Hexokinase domain in the interval 3–483 (SALLDEAARI…SGVGAALIAL (481 aa)). Positions 57–206 (NGTEKGLYLA…GLPVRVAALV (150 aa)) are hexokinase small subdomain. Residue Lys-93 participates in ATP binding. Positions 149–175 (DLGFTFSFPVRQLGINKGTLIRWTKGF) are glucose-binding. The segment at 207–472 (NDTVGTLMAR…KKIRIGISKD (266 aa)) is hexokinase large subdomain. Residue 472-477 (DGSGVG) participates in ATP binding.

The protein belongs to the hexokinase family. As to quaternary structure, monomer.

The enzyme catalyses D-glucose + ATP = D-glucose 6-phosphate + ADP + H(+). It carries out the reaction a D-hexose + ATP = a D-hexose 6-phosphate + ADP + H(+). The catalysed reaction is D-mannose + ATP = D-mannose 6-phosphate + ADP + H(+). It catalyses the reaction D-glucosamine + ATP = D-glucosamine 6-phosphate + ADP + H(+). It functions in the pathway carbohydrate metabolism; hexose metabolism. The protein operates within carbohydrate degradation; glycolysis; D-glyceraldehyde 3-phosphate and glycerone phosphate from D-glucose: step 1/4. The enzyme has great affinity for glucose. Mannose, 2-deoxyglucose and glucosamine can serve as substrates. This chain is Glucokinase (glkA), found in Aspergillus niger.